The chain runs to 427 residues: MSAIVDIIGREILDSRGNPTVECDVLLESGTMGRAAVPSGASTGSREAIELRDGEAGRYNGKGVLKAVEHINTEISEAIMGLDASEQAFLDKTLLELDGTDNKSRLGANAMLAVSMAVAKAAAEEAGLPLYRYFGGSGAMQLPVPMMNIVNGGAHANNSLDIQEFMIVPVSQPTFREALRCGAEVFHALKKILSDRGMSTAVGDEGGFAPNFGSNDECLSTILQAIEKAGYRAGEDVLLALDCAASEFYHDGKYQLAGEGLQLSSAEFTDYLATLADKFPIVSIEDGMHESDWEGWKLLTDRLGKKVQLVGDDLFVTNTRILKEGIEKGIANSILIKINQIGTLTETFAAIEMAKRAGYTAVISHRSGETEDSTIADIAVGLNAGQIKTGSLSRSDRISKYNQLLRIEEDLGDIASYPGKSAFYNLR.

Gln-163 lines the (2R)-2-phosphoglycerate pocket. The active-site Proton donor is Glu-205. Residues Asp-242, Glu-285, and Asp-312 each coordinate Mg(2+). Lys-337, Arg-366, Ser-367, and Lys-388 together coordinate (2R)-2-phosphoglycerate. Lys-337 (proton acceptor) is an active-site residue.

Belongs to the enolase family. Requires Mg(2+) as cofactor.

The protein localises to the cytoplasm. The protein resides in the secreted. It localises to the cell surface. It catalyses the reaction (2R)-2-phosphoglycerate = phosphoenolpyruvate + H2O. The protein operates within carbohydrate degradation; glycolysis; pyruvate from D-glyceraldehyde 3-phosphate: step 4/5. Its function is as follows. Catalyzes the reversible conversion of 2-phosphoglycerate (2-PG) into phosphoenolpyruvate (PEP). It is essential for the degradation of carbohydrates via glycolysis. The sequence is that of Enolase from Burkholderia lata (strain ATCC 17760 / DSM 23089 / LMG 22485 / NCIMB 9086 / R18194 / 383).